Here is a 364-residue protein sequence, read N- to C-terminus: Fructose-bisphosphate aldolase B (364 aa).

2 residues coordinate substrate: R56 and K147. Catalysis depends on E188, which acts as the Proton acceptor. K230 acts as the Schiff-base intermediate with dihydroxyacetone-P in catalysis.

The protein belongs to the class I fructose-bisphosphate aldolase family. Homotetramer.

Its subcellular location is the cytoplasm. It is found in the cytoskeleton. It localises to the microtubule organizing center. The protein localises to the centrosome. The protein resides in the centriolar satellite. It carries out the reaction beta-D-fructose 1,6-bisphosphate = D-glyceraldehyde 3-phosphate + dihydroxyacetone phosphate. It functions in the pathway carbohydrate degradation; glycolysis; D-glyceraldehyde 3-phosphate and glycerone phosphate from D-glucose: step 4/4. In Gallus gallus (Chicken), this protein is Fructose-bisphosphate aldolase B (ALDOB).